The following is a 612-amino-acid chain: Bifunctional lycopene cyclase/phytoene synthase (612 aa).

A lycopene beta-cyclase region spans residues 1 to 268 (MGWEYAQVHL…IVFGLIACDN (268 aa)). Transmembrane regions (helical) follow at residues 3-23 (WEYA…LAAV), 31-51 (LDVF…VKGL), 112-130 (LFFF…MILS), 148-168 (IAGQ…VSSG), 171-191 (GMYM…LWSI), 203-223 (NTAL…TFAL), and 246-266 (IEEA…LIAC). The segment at 275-612 (TFPEHFPRTK…IRVAWSALNK (338 aa)) is phytoene synthase.

It in the N-terminal section; belongs to the lycopene beta-cyclase family. The protein in the C-terminal section; belongs to the phytoene/squalene synthase family.

The protein localises to the membrane. The catalysed reaction is all-trans-lycopene = gamma-carotene. It carries out the reaction gamma-carotene = all-trans-beta-carotene. The enzyme catalyses 2 (2E,6E,10E)-geranylgeranyl diphosphate = 15-cis-phytoene + 2 diphosphate. It participates in carotenoid biosynthesis; beta-carotene biosynthesis. It functions in the pathway carotenoid biosynthesis; phytoene biosynthesis; all-trans-phytoene from geranylgeranyl diphosphate: step 1/1. Its function is as follows. Bifunctional enzyme; part of the car gene cluster that mediates the biosynthesis of neurosporaxanthin, a carboxylic apocarotenoid acting as an essential protective pigments and leading to orange pigmentation. CarAR catalyzes the first step of the pathway by converting geranylgeranyl diphosphate to phytoene, as well as the later cyclization step that transforms the carB product lycopene into gamma-carotene. CarAR also converts part of gamma-carotene into beta-carotene. Neurosporaxanthin is synthesized from geranyl-geranyl pyrophosphate (GGPP) through several enzymatic activities. Phytoene synthase activity performed by the bifunctional enzyme carAR first produces phytoene from geranyl-geranyl pyrophosphate (GGPP). The phytoene dehydrogenase carB then introduces 4 desaturations to lead to lycopene which is substrate of the carotene cyclase activity of carAR that leads to the production of gamma-carotene. CarB then performs a 5th desaturation reaction to yield torulene. Torulene is the substrate of the dioxidase carT that breaks the molecule, removing five carbon atoms to yield beta-apo-4'-carotenal, whereas the aldehyde dehydrogenase carD mediates the last step by converting beta-apo-4'-carotenal into neurosporaxanthin. In Fusarium fujikuroi (Bakanae and foot rot disease fungus), this protein is Bifunctional lycopene cyclase/phytoene synthase.